Here is a 1061-residue protein sequence, read N- to C-terminus: RecBCD enzyme subunit RecC (1061 aa).

The protein belongs to the RecC family. Heterotrimer of RecB, RecC and RecD. All subunits contribute to DNA-binding.

Functionally, a helicase/nuclease that prepares dsDNA breaks (DSB) for recombinational DNA repair. Binds to DSBs and unwinds DNA via a highly rapid and processive ATP-dependent bidirectional helicase activity. Unwinds dsDNA until it encounters a Chi (crossover hotspot instigator) sequence from the 3' direction. Cuts ssDNA a few nucleotides 3' to the Chi site. The properties and activities of the enzyme are changed at Chi. The Chi-altered holoenzyme produces a long 3'-ssDNA overhang and facilitates RecA-binding to the ssDNA for homologous DNA recombination and repair. Holoenzyme degrades any linearized DNA that is unable to undergo homologous recombination. In the holoenzyme this subunit recognizes the wild-type Chi sequence, and when added to isolated RecB increases its ATP-dependent helicase processivity. The chain is RecBCD enzyme subunit RecC from Buchnera aphidicola subsp. Schizaphis graminum (strain Sg).